A 317-amino-acid chain; its full sequence is Lipoyl synthase (317 aa).

[4Fe-4S] cluster contacts are provided by Cys55, Cys60, Cys66, Cys81, Cys85, Cys88, and Ser292. The region spanning 67–281 is the Radical SAM core domain; the sequence is WEDREATFLI…ERYATEIGFA (215 aa).

Belongs to the radical SAM superfamily. Lipoyl synthase family. [4Fe-4S] cluster is required as a cofactor.

The protein localises to the cytoplasm. It catalyses the reaction [[Fe-S] cluster scaffold protein carrying a second [4Fe-4S](2+) cluster] + N(6)-octanoyl-L-lysyl-[protein] + 2 oxidized [2Fe-2S]-[ferredoxin] + 2 S-adenosyl-L-methionine + 4 H(+) = [[Fe-S] cluster scaffold protein] + N(6)-[(R)-dihydrolipoyl]-L-lysyl-[protein] + 4 Fe(3+) + 2 hydrogen sulfide + 2 5'-deoxyadenosine + 2 L-methionine + 2 reduced [2Fe-2S]-[ferredoxin]. It functions in the pathway protein modification; protein lipoylation via endogenous pathway; protein N(6)-(lipoyl)lysine from octanoyl-[acyl-carrier-protein]: step 2/2. In terms of biological role, catalyzes the radical-mediated insertion of two sulfur atoms into the C-6 and C-8 positions of the octanoyl moiety bound to the lipoyl domains of lipoate-dependent enzymes, thereby converting the octanoylated domains into lipoylated derivatives. The protein is Lipoyl synthase of Mycolicibacterium gilvum (strain PYR-GCK) (Mycobacterium gilvum (strain PYR-GCK)).